Reading from the N-terminus, the 97-residue chain is Putative membrane protein insertion efficiency factor (97 aa).

Positions Val72 to Gln97 are disordered.

Belongs to the UPF0161 family.

The protein resides in the cell inner membrane. Functionally, could be involved in insertion of integral membrane proteins into the membrane. This chain is Putative membrane protein insertion efficiency factor, found in Alcanivorax borkumensis (strain ATCC 700651 / DSM 11573 / NCIMB 13689 / SK2).